The following is a 265-amino-acid chain: Speedy protein E8 (265 aa).

The interval 1-80 is disordered; sequence MGQILGKIMM…EPEKELAPEP (80 aa). The segment covering 66-80 has biased composition (acidic residues); it reads DESDDEPEKELAPEP.

The protein belongs to the Speedy/Ringo family.

This is Speedy protein E8 from Homo sapiens (Human).